Here is a 644-residue protein sequence, read N- to C-terminus: Chaperone protein HtpG (644 aa).

Positions 1 to 352 (MNARVEQLEF…AQDMSLNVSR (352 aa)) are a; substrate-binding. The segment at 353–566 (EILQQDRQIK…AFGITPALAR (214 aa)) is b. The interval 567 to 644 (LYRASGQDIP…ILADRLARTL (78 aa)) is c.

Belongs to the heat shock protein 90 family. Homodimer.

It localises to the cytoplasm. In terms of biological role, molecular chaperone. Has ATPase activity. The protein is Chaperone protein HtpG of Mycobacterium avium (strain 104).